The following is a 610-amino-acid chain: Autophagy-related protein 22-1 (610 aa).

Residues 1-11 show a composition bias toward pro residues; sequence MAFTPSSPPSP. The segment at 1–29 is disordered; that stretch reads MAFTPSSPPSPAADASQRPSRYPGEDTTP. The chain crosses the membrane as a helical span at residues 35 to 55; the sequence is ILGWYAYGIAAEVFAVCGVGS. Residue N90 is glycosylated (N-linked (GlcNAc...) asparagine). The next 3 helical transmembrane spans lie at 120-140, 152-171, and 189-209; these read SFAM…LISF, TLLL…FVFV, and CLGS…ANDP. Positions 229–265 are disordered; the sequence is GQFEPRDSFSERNPEFESQYTPGIGLGSKPSTNATSP. The span at 232–243 shows a compositional bias: basic and acidic residues; that stretch reads EPRDSFSERNPE. Residue N261 is glycosylated (N-linked (GlcNAc...) asparagine). 8 helical membrane-spanning segments follow: residues 278 to 298, 310 to 330, 384 to 404, 418 to 438, 453 to 473, 488 to 510, 522 to 544, and 553 to 573; these read VGLG…LLFA, TLPL…FTMV, VFLV…GTAI, VGCL…LWPV, LCIA…IPLF, FPLA…SFFG, YALY…GMLI, and GFFF…MVNA. Positions 588-610 are disordered; it reads AKGQESETGEPGEEAEGLLARGA. The span at 594-603 shows a compositional bias: acidic residues; it reads ETGEPGEEAE.

The protein belongs to the ATG22 family.

It localises to the vacuole membrane. Functionally, vacuolar effluxer which mediate the efflux of amino acids resulting from autophagic degradation. The release of autophagic amino acids allows the maintenance of protein synthesis and viability during nitrogen starvation. This is Autophagy-related protein 22-1 (atg22-1) from Aspergillus terreus (strain NIH 2624 / FGSC A1156).